Reading from the N-terminus, the 625-residue chain is Glucokinase regulatory protein (625 aa).

SIS domains are found at residues 90-286 (VQEV…QGIA) and 320-499 (VSTS…LLGK). Beta-D-fructose 1-phosphate-binding positions include 109-110 (TS), Glu153, and 179-181 (SVG). Residue 109-110 (TS) participates in beta-D-fructose 6-phosphate binding. Residue 179–181 (SVG) participates in beta-D-fructose 6-phosphate binding. An important for interaction with GCK region spans residues 199–200 (AV). Position 348 (Glu348) interacts with beta-D-fructose 1-phosphate. Positions 463–465 (LLF) are essential for interaction with GCK. Lys514 serves as a coordination point for beta-D-fructose 1-phosphate. Lys514 lines the beta-D-fructose 6-phosphate pocket.

This sequence belongs to the GCKR family. In terms of assembly, interacts (fructose 6-phosphate bound form) with GCK. Found in liver and pancreas. Not detected in muscle, brain, heart, thymus, intestine, uterus, adipose tissue, kidney, adrenal, lung or spleen.

Its subcellular location is the cytoplasm. The protein resides in the nucleus. It is found in the mitochondrion. Regulates glucokinase (GCK) by forming an inactive complex with this enzyme. Acts by promoting GCK recruitment to the nucleus, possibly to provide a reserve of GCK that can be quickly released in the cytoplasm after a meal. The affinity of GCKR for GCK is modulated by fructose metabolites: GCKR with bound fructose 6-phosphate has increased affinity for GCK, while GCKR with bound fructose 1-phosphate has strongly decreased affinity for GCK and does not inhibit GCK activity. The sequence is that of Glucokinase regulatory protein from Homo sapiens (Human).